Consider the following 457-residue polypeptide: PDZ and LIM domain protein 7 (457 aa).

The region spanning 1–85 (MDSFKVVLEG…RLSLGLSRAQ (85 aa)) is the PDZ domain. Residue S78 is modified to Phosphoserine. 2 disordered regions span residues 81 to 132 (LSRA…LSQN) and 186 to 226 (FMKK…PWAV). T96 is modified (phosphothreonine). Asymmetric dimethylarginine is present on R103. Residue S111 is modified to Phosphoserine. S247 bears the Phosphoserine mark. LIM zinc-binding domains follow at residues 280–338 (PVCH…VRYA), 339–398 (PSCA…MFGT), and 399–457 (KCRG…FSHV).

Binds via its LIM zinc-binding 3 domain (LIM 3) domain to endocytic codes of INSR, but not with those of IGF1R, LDLR, TFRC, or EGFR. Interacts with various PKC isoforms through the LIM zinc-binding domains. Binds to RET in a phosphorylation-independent manner via its LIM zinc-binding 2 domain (LIM 2). Probably part of a complex with SHC and the RET dimer. Interacts with TPM2, TBX4 and TBX5. Interacts (via LIM domains) with SIPA1L1. Expressed in kidney, heart, brain, lung, and skeletal muscle. Overexpression results in the synthesis of an unidentified soluble factor which acts on cells in the osteoblast lineage causing them to differentiate and secrete BMP-2.

It is found in the cytoplasm. Its subcellular location is the cytoskeleton. In terms of biological role, may function as a scaffold on which the coordinated assembly of proteins can occur. May play a role as an adapter that, via its PDZ domain, localizes LIM-binding proteins to actin filaments of both skeletal muscle and nonmuscle tissues. Involved in both of the two fundamental mechanisms of bone formation, direct bone formation (e.g. embryonic flat bones mandible and cranium), and endochondral bone formation (e.g. embryonic long bone development). Plays a role during fracture repair. Involved in BMP6 signaling pathway. The protein is PDZ and LIM domain protein 7 (Pdlim7) of Rattus norvegicus (Rat).